Consider the following 285-residue polypeptide: (3S)-malyl-CoA thioesterase (285 aa).

Substrate-binding residues include Arg70 and Glu122. Mg(2+)-binding residues include Glu122 and Asp148.

The protein belongs to the HpcH/HpaI aldolase family. As to quaternary structure, homodimer or homotrimer. It depends on Mg(2+) as a cofactor.

The catalysed reaction is (S)-malyl-CoA + H2O = (S)-malate + CoA + H(+). Its activity is regulated as follows. Reversibly inhibited by EDTA. Stimulated by the divalent cations Mg(2+) and Mn(2+). Its function is as follows. Catalyzes the hydrolysis of (3S)-malyl-CoA to (3S)-malate and free CoA. Inactive towards beta-methylmalyl-CoA and other CoA esters. This Cereibacter sphaeroides (strain ATCC 17023 / DSM 158 / JCM 6121 / CCUG 31486 / LMG 2827 / NBRC 12203 / NCIMB 8253 / ATH 2.4.1.) (Rhodobacter sphaeroides) protein is (3S)-malyl-CoA thioesterase.